Consider the following 491-residue polypeptide: 3-phosphoinositide-dependent protein kinase 1 (491 aa).

Residues 44–311 enclose the Protein kinase domain; the sequence is FEFGKIYGVG…YVALKRHPFF (268 aa). ATP-binding positions include 54–56 and Lys-73; that span reads SYS. A PIF-pocket region spans residues 75-119; that stretch reads MDKKFITKENKTAYVKLERIVLDQLEHPGIIKLYFTFQDTSSLYM. A PIF-binding region spans residues 77–112; it reads KKFITKENKTAYVKLERIVLDQLEHPGIIKLYFTFQ. Residues 122 to 124 and Glu-128 each bind ATP; that span reads ESC. The Proton acceptor role is filled by Asp-167. Glu-171 provides a ligand contact to ATP. Phosphoserine is present on Ser-177. An ATP-binding site is contributed by Asp-185. An activation loop region spans residues 185–222; sequence DFGSVKPMQDSQITVLPNAASDDKACTFVGTAAYVPPE. Residue Thr-211 is modified to Phosphothreonine; by autocatalysis. Phosphoserine occurs at positions 276 and 337. The disordered stretch occupies residues 321–377; the sequence is SQTPPKLAPDPASQTASPERDDTHGSPWNLTHIGDSLATQNEGHSAPPTSSESSGSI. Positions 365 to 376 are enriched in low complexity; sequence SAPPTSSESSGS. Ser-382 bears the Phosphoserine mark. Residues 386 to 491 enclose the PH domain; the sequence is FDSRWQQFLE…KKAIETLQNR (106 aa).

This sequence belongs to the protein kinase superfamily. AGC Ser/Thr protein kinase family. PDPK1 subfamily. Interacts with AGC1-5 and AGC1-7. Interacts with the C-terminal PIF domain of the protein kinases D6PK/AGC1-1, OXI1/AGC2-1 and PID. In terms of processing, phosphorylation on Thr-211 in the activation loop is required for full activity. PDK1 itself can autophosphorylate Thr-211, leading to its own activation. As to expression, ubiquitous.

It is found in the cytoplasm. The protein resides in the membrane. The enzyme catalyses L-seryl-[protein] + ATP = O-phospho-L-seryl-[protein] + ADP + H(+). The catalysed reaction is L-threonyl-[protein] + ATP = O-phospho-L-threonyl-[protein] + ADP + H(+). With respect to regulation, activated by phosphatidic acid (PA) and in response to the fungal elicitor xylanase. In terms of biological role, may couple lipid signals to the activation-loop phosphorylation of several protein kinases of the so-called AGC kinase family. Interacts via its pleckstrin homology domain with phosphatidic acid, PtdIns3P and PtdIns(3,4)P2 and to a lesser extent with PtdIns(4,5)P2 and PtdIns4P. May play a general role in signaling processes controlling the pathogen/stress response, polar auxin transport and development. Transphosphorylates the AGC protein kinases OXI1/AGC2-1, PK1/S6K1, PK19/S6K2 and PID resulting in their activation. This Arabidopsis thaliana (Mouse-ear cress) protein is 3-phosphoinositide-dependent protein kinase 1 (PDPK1).